We begin with the raw amino-acid sequence, 152 residues long: Transcriptional regulator MraZ (152 aa).

SpoVT-AbrB domains are found at residues 5–52 (ASAI…PLHE) and 81–124 (AQDC…EESA).

This sequence belongs to the MraZ family. As to quaternary structure, forms oligomers.

It is found in the cytoplasm. It localises to the nucleoid. The polypeptide is Transcriptional regulator MraZ (Shewanella frigidimarina (strain NCIMB 400)).